The following is a 323-amino-acid chain: ADP/ATP translocase 4 (323 aa).

The Mitochondrial intermembrane segment spans residues 1–23 (MQREPPKRKQEKKVEKGLFDATS). One copy of the Solcar 1 repeat lies at 22 to 114 (TSFGKDLLAG…FAFKDKYKQL (93 aa)). A helical membrane pass occupies residues 24–53 (FGKDLLAGGVAAAVSKTTVAPIERVKLLLQ). Topologically, residues 54-90 (VQASSKQISPEAQYKGIVDCLVRIPREQGFLSYWRGN) are mitochondrial matrix. Residues 91 to 115 (LANVIRYFPTQALNFAFKDKYKQLF) traverse the membrane as a helical segment. 2 residues coordinate ADP: Arg-96 and Lys-108. The Mitochondrial intermembrane segment spans residues 116–125 (MSGVNKEKQF). Residues 126–146 (WRWFLANLASGGAAGATSLCV) form a helical membrane-spanning segment. 2 Solcar repeats span residues 127 to 217 (RWFL…VKGL) and 224 to 311 (THFL…IKDL). Residues 147–194 (VYPLDFARTRLGADIGKGPEERQFKGLGDCIMKIAKSDGIVGLYQGFG) are Mitochondrial matrix-facing. The chain crosses the membrane as a helical span at residues 195 to 215 (VSVQGIIVYRASYFGAYDTVK). At 216 to 226 (GLLPKPKETHF) the chain is on the mitochondrial intermembrane side. Residues 227–247 (LVSFFIAQVVTTCSGILSYPF) traverse the membrane as a helical segment. The Mitochondrial matrix portion of the chain corresponds to 248–287 (DTVRRRMMMQSGEAERQYKGTLDCFMKIYQQEGIGAFFRG). Arg-251 is an ADP binding site. Positions 251-256 (RRRMMM) are important for transport activity. Residues 251–256 (RRRMMM) carry the Nucleotide carrier signature motif motif. A helical membrane pass occupies residues 288–305 (AFSNILRGTGGALVLVLY). Topologically, residues 306 to 323 (DKIKDLLNIDIGGSSSGD) are mitochondrial intermembrane.

The protein belongs to the mitochondrial carrier (TC 2.A.29) family. Monomer.

Its subcellular location is the mitochondrion inner membrane. It localises to the membrane. The protein resides in the cell projection. The protein localises to the cilium. It is found in the flagellum membrane. The catalysed reaction is ADP(in) + ATP(out) = ADP(out) + ATP(in). It catalyses the reaction dATP(out) + ADP(in) = dATP(in) + ADP(out). The enzyme catalyses dADP(in) + ADP(out) = dADP(out) + ADP(in). It carries out the reaction H(+)(in) = H(+)(out). The matrix-open state (m-state) is inhibited by the membrane-permeable bongkrekic acid (BKA). The cytoplasmic-open state (c-state) is inhibited by the membrane-impermeable toxic inhibitor carboxyatractyloside (CATR). Proton transporter activity is inhibited by ADP:ATP antiporter activity. Functionally, ADP:ATP antiporter that mediates import of ADP into the mitochondrial matrix for ATP synthesis, and export of ATP out to fuel the cell. Cycles between the cytoplasmic-open state (c-state) and the matrix-open state (m-state): operates by the alternating access mechanism with a single substrate-binding site intermittently exposed to either the cytosolic (c-state) or matrix (m-state) side of the inner mitochondrial membrane. Specifically required during spermatogenesis, probably to mediate ADP:ATP exchange in spermatocytes. Large ATP supplies from mitochondria may be critical for normal progression of spermatogenesis during early stages of meiotic prophase I, including DNA double-strand break repair and chromosomal synapsis. In addition to its ADP:ATP antiporter activity, also involved in mitochondrial uncoupling and mitochondrial permeability transition pore (mPTP) activity. Plays a role in mitochondrial uncoupling by acting as a proton transporter: proton transport uncouples the proton flows via the electron transport chain and ATP synthase to reduce the efficiency of ATP production and cause mitochondrial thermogenesis. Proton transporter activity is inhibited by ADP:ATP antiporter activity, suggesting that SLC25A31/ANT4 acts as a master regulator of mitochondrial energy output by maintaining a delicate balance between ATP production (ADP:ATP antiporter activity) and thermogenesis (proton transporter activity). Proton transporter activity requires free fatty acids as cofactor, but does not transport it. Among nucleotides, may also exchange ADP for dATP and dADP. Also plays a key role in mPTP opening, a non-specific pore that enables free passage of the mitochondrial membranes to solutes of up to 1.5 kDa, and which contributes to cell death. It is however unclear if SLC25A31/ANT4 constitutes a pore-forming component of mPTP or regulates it. The sequence is that of ADP/ATP translocase 4 from Bos taurus (Bovine).